Reading from the N-terminus, the 64-residue chain is Conotoxin Cal6.26 (64 aa).

The first 22 residues, 1-22 (MKLTCVMIVAVLVLTVCKVVTS), serve as a signal peptide directing secretion. 3 disulfides stabilise this stretch: cysteine 32–cysteine 50, cysteine 40–cysteine 54, and cysteine 49–cysteine 60.

In terms of tissue distribution, expressed by the venom duct.

It is found in the secreted. Functionally, probable neurotoxin. The chain is Conotoxin Cal6.26 from Californiconus californicus (California cone).